Here is a 440-residue protein sequence, read N- to C-terminus: Chromosome partition protein MukF (440 aa).

A leucine-zipper region spans residues 208–236 (LSETSGTLRELQDTLEAAGDKLQANLLRI).

It belongs to the MukF family. Interacts, and probably forms a ternary complex, with MukE and MukB via its C-terminal region. The complex formation is stimulated by calcium or magnesium. It is required for an interaction between MukE and MukB.

The protein resides in the cytoplasm. Its subcellular location is the nucleoid. Involved in chromosome condensation, segregation and cell cycle progression. May participate in facilitating chromosome segregation by condensation DNA from both sides of a centrally located replisome during cell division. Not required for mini-F plasmid partitioning. Probably acts via its interaction with MukB and MukE. Overexpression results in anucleate cells. It has a calcium binding activity. This Salmonella typhi protein is Chromosome partition protein MukF.